The following is a 395-amino-acid chain: Type II restriction enzyme BsuFI (395 aa).

Homodimer. The cofactor is Mg(2+).

It carries out the reaction Endonucleolytic cleavage of DNA to give specific double-stranded fragments with terminal 5'-phosphates.. Its function is as follows. A P subtype restriction enzyme that recognizes the double-stranded sequence 5'-CCGG-3' and cleaves after C-1. The polypeptide is Type II restriction enzyme BsuFI (hsdFR) (Bacillus subtilis).